Consider the following 169-residue polypeptide: Cell division inhibitor SulA (169 aa).

Positions 106-112 (ALRTGNY) are ftsZ binding. Residues 162-169 (KIHSNLYH) are lon protease binding.

It belongs to the SulA family. As to quaternary structure, interacts with FtsZ. In terms of processing, is rapidly cleaved and degraded by the Lon protease once DNA damage is repaired.

In terms of biological role, component of the SOS system and an inhibitor of cell division. Accumulation of SulA causes rapid cessation of cell division and the appearance of long, non-septate filaments. In the presence of GTP, binds a polymerization-competent form of FtsZ in a 1:1 ratio, thus inhibiting FtsZ polymerization and therefore preventing it from participating in the assembly of the Z ring. This mechanism prevents the premature segregation of damaged DNA to daughter cells during cell division. This Salmonella choleraesuis (strain SC-B67) protein is Cell division inhibitor SulA.